Reading from the N-terminus, the 323-residue chain is Phosphate acyltransferase (323 aa).

Belongs to the PlsX family. As to quaternary structure, homodimer. Probably interacts with PlsY.

It localises to the cytoplasm. The catalysed reaction is a fatty acyl-[ACP] + phosphate = an acyl phosphate + holo-[ACP]. Its pathway is lipid metabolism; phospholipid metabolism. In terms of biological role, catalyzes the reversible formation of acyl-phosphate (acyl-PO(4)) from acyl-[acyl-carrier-protein] (acyl-ACP). This enzyme utilizes acyl-ACP as fatty acyl donor, but not acyl-CoA. The polypeptide is Phosphate acyltransferase (Finegoldia magna (strain ATCC 29328 / DSM 20472 / WAL 2508) (Peptostreptococcus magnus)).